The following is a 426-amino-acid chain: 4-hydroxy-3-methylbut-2-en-1-yl diphosphate synthase (flavodoxin) (426 aa).

Residues 1–20 (MLDRDLTLSDDAYESSPVSR) are disordered. 4 residues coordinate [4Fe-4S] cluster: Cys-320, Cys-323, Cys-366, and Glu-373.

Belongs to the IspG family. It depends on [4Fe-4S] cluster as a cofactor.

It catalyses the reaction (2E)-4-hydroxy-3-methylbut-2-enyl diphosphate + oxidized [flavodoxin] + H2O + 2 H(+) = 2-C-methyl-D-erythritol 2,4-cyclic diphosphate + reduced [flavodoxin]. The protein operates within isoprenoid biosynthesis; isopentenyl diphosphate biosynthesis via DXP pathway; isopentenyl diphosphate from 1-deoxy-D-xylulose 5-phosphate: step 5/6. Its function is as follows. Converts 2C-methyl-D-erythritol 2,4-cyclodiphosphate (ME-2,4cPP) into 1-hydroxy-2-methyl-2-(E)-butenyl 4-diphosphate. The chain is 4-hydroxy-3-methylbut-2-en-1-yl diphosphate synthase (flavodoxin) from Wolbachia pipientis subsp. Culex pipiens (strain wPip).